Reading from the N-terminus, the 204-residue chain is CASP-like protein 2U2 (204 aa).

Over 1-36 (MGVLGGDAHVPIGSQVSPGSVVVTNNESFGHRKLLK) the chain is Cytoplasmic. Residues 37 to 57 (GVDFLVRIKAFAFCLAVIVLL) traverse the membrane as a helical segment. Over 58 to 84 (KNNVQTTVIAPGIVLQAKYNNTKAPVS) the chain is Extracellular. N-linked (GlcNAc...) asparagine glycosylation occurs at asparagine 77. The chain crosses the membrane as a helical span at residues 85-105 (LLVLASICCGYAFLQAVVSLL). The Cytoplasmic segment spans residues 106–117 (SFIRDKRVLNNT). A helical transmembrane segment spans residues 118–138 (VLAWLTFLLDQVLTYLLLGSA). Residues 139-170 (AATAEAAYIAKRGEDKVQWKAVCGPFKRFCDH) are Extracellular-facing. Residues 171-191 (FAATVFLSFIAVIAFAVSAAI) traverse the membrane as a helical segment. Residues 192 to 204 (SAYYLFRKSKGFK) lie on the Cytoplasmic side of the membrane.

The protein belongs to the Casparian strip membrane proteins (CASP) family. In terms of assembly, homodimer and heterodimers.

The protein localises to the cell membrane. This chain is CASP-like protein 2U2, found in Selaginella moellendorffii (Spikemoss).